A 35-amino-acid chain; its full sequence is Conotoxin TxMEKL-0422 (35 aa).

Residues 1–35 form a disordered region; that stretch reads NPASCCSCADVDPGRASRKTPKGEDQVFIKEKDRC. Residues 21 to 35 are compositionally biased toward basic and acidic residues; it reads PKGEDQVFIKEKDRC.

Contains disulfide bonds. As to expression, expressed by the venom duct.

It localises to the secreted. This Conus textile (Cloth-of-gold cone) protein is Conotoxin TxMEKL-0422.